The primary structure comprises 831 residues: Vi polysaccharide biosynthesis protein TviD (831 aa).

It functions in the pathway glycan metabolism; Vi-antigen biosynthesis. Its pathway is capsule biogenesis; capsule polysaccharide biosynthesis. In terms of biological role, may be required for maturation of the Vi polysaccharide. In Salmonella typhi, this protein is Vi polysaccharide biosynthesis protein TviD (tviD).